A 278-amino-acid polypeptide reads, in one-letter code: Potassium/proton antiporter CemA (278 aa).

4 consecutive transmembrane segments (helical) span residues 60–80, 155–175, 201–221, and 239–259; these read YLLL…SFVF, AMKN…LIVT, FLII…GWEV, and IFLF…YWIF.

The protein belongs to the CemA family.

The protein resides in the plastid. It localises to the chloroplast inner membrane. The catalysed reaction is K(+)(in) + H(+)(out) = K(+)(out) + H(+)(in). Contributes to K(+)/H(+) antiport activity by supporting proton efflux to control proton extrusion and homeostasis in chloroplasts in a light-dependent manner to modulate photosynthesis. Prevents excessive induction of non-photochemical quenching (NPQ) under continuous-light conditions. Indirectly promotes efficient inorganic carbon uptake into chloroplasts. This Rhodomonas salina (Cryptomonas salina) protein is Potassium/proton antiporter CemA.